A 485-amino-acid chain; its full sequence is Ribulose bisphosphate carboxylase large chain (485 aa).

The propeptide occupies 1–2 (MS). Position 3 is an N-acetylproline (proline 3). Lysine 14 carries the N6,N6,N6-trimethyllysine modification. Residues asparagine 123 and threonine 173 each contribute to the substrate site. Lysine 175 acts as the Proton acceptor in catalysis. Lysine 177 is a binding site for substrate. Mg(2+) contacts are provided by lysine 201, aspartate 203, and glutamate 204. Lysine 201 carries the post-translational modification N6-carboxylysine. Histidine 294 serves as the catalytic Proton acceptor. Positions 295, 327, and 379 each coordinate substrate.

It belongs to the RuBisCO large chain family. Type I subfamily. In terms of assembly, heterohexadecamer of 8 large chains and 8 small chains; disulfide-linked. The disulfide link is formed within the large subunit homodimers. It depends on Mg(2+) as a cofactor. In terms of processing, the disulfide bond which can form in the large chain dimeric partners within the hexadecamer appears to be associated with oxidative stress and protein turnover.

Its subcellular location is the plastid. It localises to the chloroplast. It catalyses the reaction 2 (2R)-3-phosphoglycerate + 2 H(+) = D-ribulose 1,5-bisphosphate + CO2 + H2O. The catalysed reaction is D-ribulose 1,5-bisphosphate + O2 = 2-phosphoglycolate + (2R)-3-phosphoglycerate + 2 H(+). Functionally, ruBisCO catalyzes two reactions: the carboxylation of D-ribulose 1,5-bisphosphate, the primary event in carbon dioxide fixation, as well as the oxidative fragmentation of the pentose substrate in the photorespiration process. Both reactions occur simultaneously and in competition at the same active site. This chain is Ribulose bisphosphate carboxylase large chain, found in Helianthus annuus (Common sunflower).